The sequence spans 422 residues: MKPLLKENSLIQVKHILKAHQNVKDVVIHTPLQRNDRLSERYECNIYLKREDLQVVRSFKLRGAYHKMKQLSSEQTENGVVCASAGNHAQGVAFSCKHLGIHGKIFMPSTTPRQKVSQVELFGKGFIDIILTGDTFDDVYKSAAECCEAESRTFIHPFDDPDVMAGQGTLAVEILNDIDTEPHFLFASVGGGGLLSGVGTYLKNVSPDTKVIAVEPAGAASYFESNKAGHVVTLDKIDKFVDGAAVKKIGEETFRTLETVVDDILLVPEGKVCTSILELYNECAVVAEPAGALSVAALDLYKDQIKGKNVVCVVSGGNNDIGRMQEMKERSLIFEGLQHYFIVNFPQRAGALREFLDEVLGPNDDITRFEYTKKNNKSNGPALVGIELQNKADYGPLIERMNKKPFHYVEVNKDEDLFHLLI.

Lys-60 carries the post-translational modification N6-(pyridoxal phosphate)lysine. Pyridoxal 5'-phosphate-binding positions include Asn-87, 190 to 194 (GGGGL), and Ser-315. The 75-residue stretch at 339–413 (HYFIVNFPQR…KPFHYVEVNK (75 aa)) folds into the ACT-like domain.

It belongs to the serine/threonine dehydratase family. In terms of assembly, homotetramer. Requires pyridoxal 5'-phosphate as cofactor.

The catalysed reaction is L-threonine = 2-oxobutanoate + NH4(+). Its pathway is amino-acid biosynthesis; L-isoleucine biosynthesis; 2-oxobutanoate from L-threonine: step 1/1. Functionally, catalyzes the anaerobic formation of alpha-ketobutyrate and ammonia from threonine in a two-step reaction. The first step involved a dehydration of threonine and a production of enamine intermediates (aminocrotonate), which tautomerizes to its imine form (iminobutyrate). Both intermediates are unstable and short-lived. The second step is the nonenzymatic hydrolysis of the enamine/imine intermediates to form 2-ketobutyrate and free ammonia. In the low water environment of the cell, the second step is accelerated by RidA. In Bacillus subtilis (strain 168), this protein is L-threonine dehydratase biosynthetic IlvA (ilvA).